The chain runs to 785 residues: Hyperosmolality-gated Ca2+ permeable channel 1.7 (785 aa).

Residues 7 to 27 (IGLSAAINLLSAFAFLFAFAM) form a helical membrane-spanning segment. Ser54 carries the post-translational modification Phosphoserine. 9 helical membrane-spanning segments follow: residues 101-121 (IYLL…GVLV), 156-176 (FWAH…ILYM), 373-393 (LLTT…IAFV), 425-445 (FLPG…LMTM), 465-485 (YFWF…TAFQ), 510-530 (ATFF…AEIL), 582-602 (AVAP…YVVF), 628-648 (LIIC…TKKF), and 651-671 (VTAL…YCAG). Residues 725–761 (VDEEESNPLVRTKRTSQGTTRYNSEASSSATTTPVAN) are disordered. The segment covering 739-761 (TSQGTTRYNSEASSSATTTPVAN) has biased composition (polar residues).

Belongs to the CSC1 (TC 1.A.17) family. Post-translationally, phosphorylated and activated by BIK1.

It localises to the membrane. It carries out the reaction Ca(2+)(in) = Ca(2+)(out). Functionally, calcium-permeable channel involved in plant stomatal immunity. This Arabidopsis thaliana (Mouse-ear cress) protein is Hyperosmolality-gated Ca2+ permeable channel 1.7.